The chain runs to 32 residues: Photosystem II reaction center protein T (32 aa).

A helical membrane pass occupies residues 3 to 23; that stretch reads AFAYVLILTLAVVTLFFAVAF.

This sequence belongs to the PsbT family. In terms of assembly, PSII is composed of 1 copy each of membrane proteins PsbA, PsbB, PsbC, PsbD, PsbE, PsbF, PsbH, PsbI, PsbJ, PsbK, PsbL, PsbM, PsbT, PsbX, PsbY, Psb30/Ycf12, peripheral proteins PsbO, CyanoQ (PsbQ), PsbU, PsbV and a large number of cofactors. It forms dimeric complexes.

Its subcellular location is the cellular thylakoid membrane. Its function is as follows. Found at the monomer-monomer interface of the photosystem II (PS II) dimer, plays a role in assembly and dimerization of PSII. PSII is a light-driven water plastoquinone oxidoreductase, using light energy to abstract electrons from H(2)O, generating a proton gradient subsequently used for ATP formation. The protein is Photosystem II reaction center protein T of Prochlorococcus marinus (strain MIT 9301).